The primary structure comprises 367 residues: tRNA pseudouridine synthase D (367 aa).

The active-site Nucleophile is Asp-78. The TRUD domain maps to 153–300; the sequence is GVPNYFGEQR…KQERRRIRLT (148 aa).

Belongs to the pseudouridine synthase TruD family.

It carries out the reaction uridine(13) in tRNA = pseudouridine(13) in tRNA. In terms of biological role, responsible for synthesis of pseudouridine from uracil-13 in transfer RNAs. This chain is tRNA pseudouridine synthase D, found in Colwellia psychrerythraea (strain 34H / ATCC BAA-681) (Vibrio psychroerythus).